A 274-amino-acid polypeptide reads, in one-letter code: Kit ligand (274 aa).

Residues 1–25 (MKKTQTWIITCIYLQLLLFNPLVRT) form the signal peptide. Topologically, residues 26–215 (KGICRNRVTD…ANPLGDSNLQ (190 aa)) are extracellular. Disulfide bonds link Cys-29–Cys-114 and Cys-68–Cys-164. Residues Asn-90, Asn-97, Asn-145, and Asn-196 are each glycosylated (N-linked (GlcNAc...) asparagine). A helical transmembrane segment spans residues 216–238 (WAAMALPAFFSLVIGFAFGALYW). At 239 to 274 (KKKQPNLTRTAENIQINEEDNEISMLQEKEREFQEV) the chain is on the cytoplasmic side.

This sequence belongs to the SCF family. Homodimer, non-covalently linked. Heterotetramer with KIT, binding two KIT molecules; thereby mediates KIT dimerization and subsequent activation by autophosphorylation. A soluble form is produced by proteolytic processing of isoform 1 in the extracellular domain.

The protein localises to the cytoplasm. It localises to the cytoskeleton. Its subcellular location is the cell membrane. The protein resides in the cell projection. It is found in the lamellipodium. The protein localises to the filopodium. It localises to the secreted. Its function is as follows. Ligand for the receptor-type protein-tyrosine kinase KIT. Plays an essential role in the regulation of cell survival and proliferation, hematopoiesis, stem cell maintenance, gametogenesis, mast cell development, migration and function, and in melanogenesis. KITLG/SCF binding can activate several signaling pathways. Promotes phosphorylation of PIK3R1, the regulatory subunit of phosphatidylinositol 3-kinase, and subsequent activation of the kinase AKT1. KITLG/SCF and KIT also transmit signals via GRB2 and activation of RAS, RAF1 and the MAP kinases MAPK1/ERK2 and/or MAPK3/ERK1. KITLG/SCF and KIT promote activation of STAT family members STAT1, STAT3 and STAT5. KITLG/SCF and KIT promote activation of PLCG1, leading to the production of the cellular signaling molecules diacylglycerol and inositol 1,4,5-trisphosphate. KITLG/SCF acts synergistically with other cytokines, probably interleukins. This Neovison vison (American mink) protein is Kit ligand (KITLG).